A 457-amino-acid chain; its full sequence is uncharacterized protein (457 aa).

In terms of domain architecture, TRAM spans 5–63 (PVKKNDVIEVEIIDLTHEGLGVAKVDHYPLFIENALPGEKLEIKVLKTGKSFGYGKVLT). S-adenosyl-L-methionine-binding residues include Gln-287, Tyr-316, Glu-337, and Asp-385. The active-site Nucleophile is the Cys-412.

This sequence belongs to the class I-like SAM-binding methyltransferase superfamily. RNA M5U methyltransferase family.

This is an uncharacterized protein from Enterococcus faecalis (strain ATCC 700802 / V583).